Consider the following 623-residue polypeptide: Regulatory solute carrier protein family 1 member 1 (623 aa).

3 stretches are compositionally biased toward polar residues: residues 1-16 (MSSLPTSDGFNHQAHP), 83-99 (CASSADNAPANQTPAIP), and 133-144 (EASLSVTTTRMQ). Disordered regions lie at residues 1–48 (MSSL…PDSI), 71–99 (RKEQLPLQDPSDCASSADNAPANQTPAIP), 116–189 (SAEG…APHD), and 433–493 (EELT…PHCT). Basic and acidic residues-rich tracts occupy residues 150 to 159 (IGEKGWHPEY), 170 to 180 (QHEEPRNEQHE), and 460 to 473 (LVDKENVPRSRESV). The span at 474–491 (NESSLVTLDSAKTSNQPH) shows a compositional bias: polar residues. The UBA domain occupies 577 to 617 (IFPAADIDRILRAGFTLQEALGALHRVGGNADLALLVLLAK).

As to quaternary structure, interacts with YRDC. As to expression, renal outer cortex and outer medulla, small intestine and liver.

The protein resides in the cell membrane. It is found in the nucleus. It localises to the golgi apparatus. The protein localises to the trans-Golgi network. Its function is as follows. Mediates transcriptional and post-transcriptional regulation of SLC5A1. Inhibits a dynamin and PKC-dependent exocytotic pathway of SLC5A1. Also involved in transcriptional regulation of SLC22A2. Exhibits glucose-dependent, short-term inhibition of SLC5A1 and SLC22A2 by inhibiting the release of vesicles from the trans-Golgi network. The sequence is that of Regulatory solute carrier protein family 1 member 1 (RSC1A1) from Sus scrofa (Pig).